Consider the following 365-residue polypeptide: tRNA N6-adenosine threonylcarbamoyltransferase (365 aa).

Residues H122 and H126 each contribute to the Fe cation site. Substrate-binding positions include 147-151 (LVSGG), D180, G193, and N293. D321 provides a ligand contact to Fe cation. Residues 340–365 (PNEIDTAARPRWPLSERTPATPEHVS) form a disordered region.

It belongs to the KAE1 / TsaD family. Fe(2+) is required as a cofactor.

Its subcellular location is the cytoplasm. It catalyses the reaction L-threonylcarbamoyladenylate + adenosine(37) in tRNA = N(6)-L-threonylcarbamoyladenosine(37) in tRNA + AMP + H(+). Its function is as follows. Required for the formation of a threonylcarbamoyl group on adenosine at position 37 (t(6)A37) in tRNAs that read codons beginning with adenine. Is involved in the transfer of the threonylcarbamoyl moiety of threonylcarbamoyl-AMP (TC-AMP) to the N6 group of A37, together with TsaE and TsaB. TsaD likely plays a direct catalytic role in this reaction. This Gluconobacter oxydans (strain 621H) (Gluconobacter suboxydans) protein is tRNA N6-adenosine threonylcarbamoyltransferase.